A 509-amino-acid polypeptide reads, in one-letter code: tRNA-2-methylthio-N(6)-dimethylallyladenosine synthase (509 aa).

Polar residues predominate over residues 1–13 (MNEQQRLASQQAN). Positions 1 to 26 (MNEQQRLASQQANSSKKKEEKDYSKY) are disordered. A compositionally biased stretch (basic and acidic residues) spans 16–25 (KKKEEKDYSK). Positions 66 to 184 (RKFYIRTYGC…LPYILKDAMF (119 aa)) constitute an MTTase N-terminal domain. [4Fe-4S] cluster contacts are provided by cysteine 75, cysteine 111, cysteine 145, cysteine 221, cysteine 225, and cysteine 228. A Radical SAM core domain is found at 207–437 (RRGDIKAWVN…NALVNKLAIE (231 aa)). The region spanning 440-503 (NRYKGQIVEV…TWSLNGELVE (64 aa)) is the TRAM domain.

Belongs to the methylthiotransferase family. MiaB subfamily. In terms of assembly, monomer. [4Fe-4S] cluster is required as a cofactor.

It is found in the cytoplasm. The catalysed reaction is N(6)-dimethylallyladenosine(37) in tRNA + (sulfur carrier)-SH + AH2 + 2 S-adenosyl-L-methionine = 2-methylsulfanyl-N(6)-dimethylallyladenosine(37) in tRNA + (sulfur carrier)-H + 5'-deoxyadenosine + L-methionine + A + S-adenosyl-L-homocysteine + 2 H(+). Functionally, catalyzes the methylthiolation of N6-(dimethylallyl)adenosine (i(6)A), leading to the formation of 2-methylthio-N6-(dimethylallyl)adenosine (ms(2)i(6)A) at position 37 in tRNAs that read codons beginning with uridine. The polypeptide is tRNA-2-methylthio-N(6)-dimethylallyladenosine synthase (Bacillus cereus (strain ATCC 10987 / NRS 248)).